Here is a 387-residue protein sequence, read N- to C-terminus: Muscleblind-like protein 1 (387 aa).

Thr6 is modified (phosphothreonine). C3H1-type zinc fingers lie at residues 13-41 (WLTLEVCREFQRGTCSRPDTECKFAHPSK), 47-73 (NGRVIACFDSLKGRCSRENCKYLHPPP), 178-206 (TDRLEVCREYQRGNCNRGENDCRFAHPAD), and 214-240 (DNTVTVCMDYIKGRCSREKCKYFHPPA).

Belongs to the muscleblind family. As to quaternary structure, interacts with DDX1 and YBX1. Interacts with HNRNPH1; the interaction in RNA-independent. Interacts with RBPMS; the interaction allows cooperative assembly of RNA-bound stable cell-specific alternative splicing regulatory complexes.

It is found in the nucleus. The protein resides in the cytoplasm. Its subcellular location is the cytoplasmic granule. Functionally, mediates pre-mRNA alternative splicing regulation. Acts either as activator or repressor of splicing on specific pre-mRNA targets. Inhibits cardiac troponin-T (TNNT2) pre-mRNA exon inclusion but induces insulin receptor (IR) pre-mRNA exon inclusion in muscle. Antagonizes the alternative splicing activity pattern of CELF proteins. Regulates the TNNT2 exon 5 skipping through competition with U2AF2. Inhibits the formation of the spliceosome A complex on intron 4 of TNNT2 pre-mRNA. Binds to the stem-loop structure within the polypyrimidine tract of TNNT2 intron 4 during spliceosome assembly. Binds to the 5'-YGCU(U/G)Y-3'consensus sequence. Binds to the IR RNA. Binds to expanded CUG repeat RNA, which folds into a hairpin structure containing GC base pairs and bulged, unpaired U residues. Together with RNA binding proteins RBPMS and RBFOX2, activates vascular smooth muscle cells alternative splicing events. Regulates NCOR2 alternative splicing. The chain is Muscleblind-like protein 1 from Rattus norvegicus (Rat).